The sequence spans 238 residues: Survival of motor neuron-related-splicing factor 30 (238 aa).

One can recognise a Tudor domain in the interval 72–132 (SWKVGDKCMA…KPVEEGRKAK (61 aa)). The Nuclear localization signal motif lies at 142–160 (KKEMIAQQREYKKKKALKK). At Ser201 the chain carries Phosphoserine. The residue at position 219 (Lys219) is an N6-acetyllysine.

Belongs to the SMN family. As to quaternary structure, associates with spliceosomes. Associates with U4/U5/U6 tri-snRNP and with U2 snRNP.

Its subcellular location is the nucleus speckle. The protein resides in the nucleus. It is found in the cajal body. Its function is as follows. Involved in spliceosome assembly. This Mus musculus (Mouse) protein is Survival of motor neuron-related-splicing factor 30 (Smndc1).